The chain runs to 95 residues: Aspartyl/glutamyl-tRNA(Asn/Gln) amidotransferase subunit C (95 aa).

Belongs to the GatC family. Heterotrimer of A, B and C subunits.

The catalysed reaction is L-glutamyl-tRNA(Gln) + L-glutamine + ATP + H2O = L-glutaminyl-tRNA(Gln) + L-glutamate + ADP + phosphate + H(+). It carries out the reaction L-aspartyl-tRNA(Asn) + L-glutamine + ATP + H2O = L-asparaginyl-tRNA(Asn) + L-glutamate + ADP + phosphate + 2 H(+). In terms of biological role, allows the formation of correctly charged Asn-tRNA(Asn) or Gln-tRNA(Gln) through the transamidation of misacylated Asp-tRNA(Asn) or Glu-tRNA(Gln) in organisms which lack either or both of asparaginyl-tRNA or glutaminyl-tRNA synthetases. The reaction takes place in the presence of glutamine and ATP through an activated phospho-Asp-tRNA(Asn) or phospho-Glu-tRNA(Gln). In Rhodospirillum rubrum (strain ATCC 11170 / ATH 1.1.1 / DSM 467 / LMG 4362 / NCIMB 8255 / S1), this protein is Aspartyl/glutamyl-tRNA(Asn/Gln) amidotransferase subunit C.